Consider the following 430-residue polypeptide: Aspartate aminotransferase, mitochondrial (430 aa).

The N-terminal 29 residues, 1–29 (MALLHSGRVLSGIAAAFHPGLAAAASARA), are a transit peptide targeting the mitochondrion. The residue at position 48 (T48) is a Phosphothreonine. At K59 the chain carries N6-acetyllysine. Residue G65 coordinates substrate. K73 carries the post-translational modification N6-acetyllysine; alternate. K73 bears the N6-succinyllysine; alternate mark. At K82 the chain carries N6-acetyllysine. Residue K90 is modified to N6-acetyllysine; alternate. Residue K90 is modified to N6-succinyllysine; alternate. 3'-nitrotyrosine; alternate is present on Y96. Y96 is modified (phosphotyrosine; alternate). N6-acetyllysine; alternate is present on residues K107 and K122. K107 and K122 each carry N6-succinyllysine; alternate. A Phosphoserine modification is found at S143. An N6-acetyllysine; alternate modification is found at K159. Residue K159 is modified to N6-succinyllysine; alternate. W162 provides a ligand contact to substrate. At K185 the chain carries N6-acetyllysine; alternate. N6-succinyllysine; alternate is present on K185. Residue N215 participates in substrate binding. K227 bears the N6-succinyllysine mark. K234 is subject to N6-acetyllysine. N6-acetyllysine; alternate occurs at positions 279 and 296. At K279 the chain carries N6-(pyridoxal phosphate)lysine; alternate. K296 bears the N6-succinyllysine; alternate mark. Residue K302 is modified to N6-acetyllysine. K309 is subject to N6-acetyllysine; alternate. K309 carries the N6-succinyllysine; alternate modification. R313 bears the Asymmetric dimethylarginine mark. A Phosphothreonine modification is found at T333. K338 carries the post-translational modification N6-acetyllysine; alternate. K338 carries the N6-succinyllysine; alternate modification. At K345 the chain carries N6-acetyllysine. K363 is modified (N6-acetyllysine; alternate). K363 is subject to N6-succinyllysine; alternate. An N6-acetyllysine mark is found at K364 and K387. 2 positions are modified to N6-acetyllysine; alternate: K396 and K404. N6-succinyllysine; alternate occurs at positions 396 and 404. R407 provides a ligand contact to substrate.

Belongs to the class-I pyridoxal-phosphate-dependent aminotransferase family. As to quaternary structure, homodimer. It depends on pyridoxal 5'-phosphate as a cofactor.

Its subcellular location is the mitochondrion matrix. It is found in the cell membrane. The catalysed reaction is L-aspartate + 2-oxoglutarate = oxaloacetate + L-glutamate. The enzyme catalyses L-kynurenine + 2-oxoglutarate = kynurenate + L-glutamate + H2O. Its function is as follows. Catalyzes the irreversible transamination of the L-tryptophan metabolite L-kynurenine to form kynurenic acid (KA). As a member of the malate-aspartate shuttle, it has a key role in the intracellular NAD(H) redox balance. Is important for metabolite exchange between mitochondria and cytosol, and for amino acid metabolism. Facilitates cellular uptake of long-chain free fatty acids. In Macaca fascicularis (Crab-eating macaque), this protein is Aspartate aminotransferase, mitochondrial (GOT2).